The following is a 185-amino-acid chain: HTH-type transcriptional regulator SAR2658 (185 aa).

An HTH tetR-type domain is found at 6–66 (KENRQRIEEI…YVIQRDLDIF (61 aa)). The segment at residues 29–48 (SMNRIAKELGIGMGTLYRHF) is a DNA-binding region (H-T-H motif).

The polypeptide is HTH-type transcriptional regulator SAR2658 (Staphylococcus aureus (strain MRSA252)).